The primary structure comprises 208 residues: Redox-sensing transcriptional repressor Rex (208 aa).

Residues 16–55 (LYYRCLSELNEKGEDKVSSAVLERLLKIDAATVRRDFSYF) constitute a DNA-binding region (H-T-H motif). 90–95 (GVGNLG) contributes to the NAD(+) binding site.

It belongs to the transcriptional regulatory Rex family. In terms of assembly, homodimer.

It is found in the cytoplasm. Modulates transcription in response to changes in cellular NADH/NAD(+) redox state. The polypeptide is Redox-sensing transcriptional repressor Rex (Pediococcus pentosaceus (strain ATCC 25745 / CCUG 21536 / LMG 10740 / 183-1w)).